The following is a 909-amino-acid chain: Villin-1 (909 aa).

6 Gelsolin-like repeats span residues lysine 29–isoleucine 79, valine 149–alanine 189, glycine 262–lysine 305, leucine 391–alanine 448, methionine 529–glutamate 569, and leucine 631–glutamate 672. Disordered regions lie at residues serine 733–glutamate 781 and aspartate 816–arginine 835. The segment covering glutamine 752–glutamine 762 has biased composition (basic and acidic residues). Serine 780 carries the post-translational modification Phosphoserine. Residues serine 844 to phenylalanine 909 enclose the HP domain.

Belongs to the villin/gelsolin family. In terms of tissue distribution, expressed in all tissues examined. Mainly detected in the vascular tissue and the pericycle of roots and in the vasculature of leaves. Not expressed in the root cap.

The protein localises to the cytoplasm. It localises to the cytoskeleton. Binds actin and actin filament bundles in a Ca(2+)/calmodulin-insensitive manner, but is unable to sever, cap, and nucleate actin filament formation in vitro. Does not protect individual filaments from severing by VLN3 (AC O81645). The polypeptide is Villin-1 (Arabidopsis thaliana (Mouse-ear cress)).